The chain runs to 513 residues: Maturase K (513 aa).

This sequence belongs to the intron maturase 2 family. MatK subfamily.

The protein localises to the plastid. Its subcellular location is the chloroplast. In terms of biological role, usually encoded in the trnK tRNA gene intron. Probably assists in splicing its own and other chloroplast group II introns. This Zea mays (Maize) protein is Maturase K.